Reading from the N-terminus, the 307-residue chain is Fructose-bisphosphate aldolase (307 aa).

D-glyceraldehyde 3-phosphate is bound at residue Ser49. Catalysis depends on Asp82, which acts as the Proton donor. The Zn(2+) site is built by His83, Asp104, Glu134, and His180. A dihydroxyacetone phosphate-binding site is contributed by Gly181. Residue His210 coordinates Zn(2+). Dihydroxyacetone phosphate is bound by residues 211–213 (GAS) and 253–256 (NTDT).

It belongs to the class II fructose-bisphosphate aldolase family. As to quaternary structure, homodimer. Zn(2+) serves as cofactor.

The catalysed reaction is beta-D-fructose 1,6-bisphosphate = D-glyceraldehyde 3-phosphate + dihydroxyacetone phosphate. Its pathway is carbohydrate degradation; glycolysis; D-glyceraldehyde 3-phosphate and glycerone phosphate from D-glucose: step 4/4. Functionally, catalyzes the aldol condensation of dihydroxyacetone phosphate (DHAP or glycerone-phosphate) with glyceraldehyde 3-phosphate (G3P) to form fructose 1,6-bisphosphate (FBP) in gluconeogenesis and the reverse reaction in glycolysis. The protein is Fructose-bisphosphate aldolase (fba) of Helicobacter pylori (strain J99 / ATCC 700824) (Campylobacter pylori J99).